The chain runs to 1577 residues: MKTFLLIFLLICVCKGITNITTPSIYFDLKKINRFQDYLNNGITPSINLTFHDFYYPDVCVNTIKNIDGSTNFVKSSFLNAPTNFANLYITKGSKMTVKPNQILGAFINILCIEGSLEVPVGVFPFFIGALVILPGGNFKSESSFRFMNLVNSKIDPLNFFPGILTLGGSLSILGPKSIKYSANRLGDFQFQLLELIDPNSFNSDYKANIYSESFVTGQQCDFVSITNGYTLTVGGCQGVPSTDVNIYIFFATVDYDCTFIDSDSEVPASIYISGDTNVHIENFFLNSLGKTTNANYNDTILIFSPTDDTNVTDIIIGTNQRYRNSLFVEFSNNVTLRNNFIRESIESRSPLMFFASSPILEGNLVVSNSGSSVIAQFGTEFIQSTNNSYFLEPPTQPVIPNDNNMDYGTEGNGIYSLSPIVSFTTDVFVGQLISINFNFIANRSLVTGFNYDCFAPCYPGSPIISNLVQHSVDFNIIKPTFSYSHGNTTSSTTTSSTTTNTNSHFLLNVNDNGNEPSSYYSFNQLSIASEAIKVNLPIGTLGIGNLFATNNFKIDGALERLDILNSIFNLPPPISNNFSQSGILLSTTTSMLNSYVFVSIGSEPTRIESQIYGSTITPYYYNNIETLDLFQIQSIFPSVQYQIIKNSTINITINITTTTTTTTTPTTNNVVCSFTSIVNQQSSVTNEISINETLIQMDPILNNCVFPLSIDQEGSLKLRVTIKNQNSTLENQYYYIIDFPEITIFQSFQFYTGIKFIDVQSSSSSSQQTSSFSPTTTTFLNLLSTTENSNGFLNGCQISNQCTLSNNVKYVSSLPNVTNSPDFQLFQSGITPIIPYDPVVINLGIEKNKTFQFQLFFTFYQPIDQYSSPLSIFIQSEPYLLLDPLIDAPNFKNFTFFYDNLNQDSIEISFISRGDIYLTSMAIYSLDLVSYESSDSSSSSSNSSSSTGNGIGDIVNNEDNHKKLVIALSVSIPVAALLVILCFGIFICYNNNKKNKNETKGKDIETNTDKKDDENENENCKFQFKDEFLTNPNEINIQLKKLMINKSSTLPPQSTISIDTSPSSENTTFTESLTPKKSATVNGEIDFSRNSTNESTVSNSSSENNSDNNNNNNNKCKKEKLSSFPTIPGTNLTNIPLNLVGRKSRNPEDKYRTNNDILVCLQESHYFKPDDPSIPIEFSESVLDFGRGSKCLIDETYIYTISVKNKSTTDYNILLILPIDNNTGTISTDTQYFQINAGESKPISFSISLNCTTKYFEKIGVSIEELNYHTFICVHMESELSTRLDFSELDFDEICGQGTYGMVYKGKWRSQVVAIKMMRVGTVNCDEVYREMDIMGKIRHQNVISFIGCVVSLEHLCIVTEFSPIGSLGDLIHGDNNQKKSNTNTITNTITNTNTNTNTSTSTSTKLTVKQKLRIAIDIARGCQFLHQCGIIHRDLKPDNVLVFDINHNAPVCAKISDFGTSKETNEFSNKNTNCVGTPIYMSNEILEKKTYDNSTDVYSFAVLFYEMMIEEVPFSEIDEKWEIPSKVISGWRPTKGLNSLDRDIKNLINICWAPHSLPSFDEIVFSLVKIFKRFN.

An N-terminal signal peptide occupies residues 1–16 (MKTFLLIFLLICVCKG). Over 17–966 (ITNITTPSIY…NNEDNHKKLV (950 aa)) the chain is Extracellular. Residues 967–987 (IALSVSIPVAALLVILCFGIF) traverse the membrane as a helical segment. At 988 to 1577 (ICYNNNKKNK…SLVKIFKRFN (590 aa)) the chain is on the cytoplasmic side. Residues 998-1014 (NETKGKDIETNTDKKDD) show a composition bias toward basic and acidic residues. 2 disordered regions span residues 998–1019 (NETKGKDIETNTDKKDDENENE) and 1050–1128 (TLPP…FPTI). Positions 1050-1082 (TLPPQSTISIDTSPSSENTTFTESLTPKKSATV) are enriched in polar residues. The span at 1091 to 1115 (NSTNESTVSNSSSENNSDNNNNNNN) shows a compositional bias: low complexity. In terms of domain architecture, Protein kinase spans 1290–1573 (LDFDEICGQG…EIVFSLVKIF (284 aa)). ATP is bound by residues 1296-1304 (CGQGTYGMV) and Lys1317. The Proton acceptor role is filled by Asp1436.

This sequence in the N-terminal section; belongs to the GDT family. The protein in the C-terminal section; belongs to the protein kinase superfamily. TKL Ser/Thr protein kinase family.

It is found in the membrane. It carries out the reaction L-seryl-[protein] + ATP = O-phospho-L-seryl-[protein] + ADP + H(+). It catalyses the reaction L-threonyl-[protein] + ATP = O-phospho-L-threonyl-[protein] + ADP + H(+). The polypeptide is Probable serine/threonine-protein kinase gdt9 (gdt9) (Dictyostelium discoideum (Social amoeba)).